The sequence spans 420 residues: UDP-N-acetylglucosamine 1-carboxyvinyltransferase (420 aa).

22-23 is a phosphoenolpyruvate binding site; that stretch reads KN. Arg92 serves as a coordination point for UDP-N-acetyl-alpha-D-glucosamine. The Proton donor role is filled by Cys116. The residue at position 116 (Cys116) is a 2-(S-cysteinyl)pyruvic acid O-phosphothioketal. UDP-N-acetyl-alpha-D-glucosamine-binding positions include 121 to 125, Asp307, and Leu329; that span reads RPIDL.

This sequence belongs to the EPSP synthase family. MurA subfamily.

The protein localises to the cytoplasm. It catalyses the reaction phosphoenolpyruvate + UDP-N-acetyl-alpha-D-glucosamine = UDP-N-acetyl-3-O-(1-carboxyvinyl)-alpha-D-glucosamine + phosphate. It functions in the pathway cell wall biogenesis; peptidoglycan biosynthesis. Functionally, cell wall formation. Adds enolpyruvyl to UDP-N-acetylglucosamine. This Nitratiruptor sp. (strain SB155-2) protein is UDP-N-acetylglucosamine 1-carboxyvinyltransferase.